A 76-amino-acid polypeptide reads, in one-letter code: Peptide ARACIN 1 (76 aa).

Residues 1-22 form the signal peptide; it reads MAMKTSHVLLLCLMFVIGFVEA. A propeptide spans 23-35 (removed in mature form); sequence RRSDTGPDISTPP. The SxS motif essential for MIK2 binding motif lies at 36 to 38; that stretch reads SGS. Residues 36-49 carry the SCOOP motif motif; the sequence is SGSCGASIAEFNSS. The interval 56 to 76 is disordered; the sequence is APPCRRPRLQNSEDVTHTTLP. Residues 64–76 show a composition bias toward polar residues; it reads LQNSEDVTHTTLP.

The protein belongs to the serine rich endogenous peptide (SCOOP) phytocytokine family. In terms of assembly, interacts with MIK2 (via extracellular leucine-rich repeat domain); this interaction triggers the formation of complex between MIK2 and the BAK1/SERK3 and SERK4 coreceptors, and subsequent BAK1 activation by phosphorylation. In terms of tissue distribution, mainly expressed in young developing leaves, hydathodes, immature flowers and elongating pollen tubes.

Its subcellular location is the cell membrane. The protein localises to the secreted. It is found in the extracellular space. The protein resides in the apoplast. It localises to the endoplasmic reticulum. Functionally, brassicaceae-specific phytocytokine (plant endogenous peptide released into the apoplast) perceived by MIK2 in a BAK1/SERK3 and SERK4 coreceptors-dependent manner, that modulates various physiological and antimicrobial processes including growth prevention and reactive oxygen species (ROS) response regulation. Inhibits the fungal growth of Alternaria brassicicola, Sclerotinia sclerotiorum, Fusarium graminearum, yeast (Saccharomyces) and Botrytis cinerea, thus being an antimicrobial peptide (AMP). Promotes resistance to A.brassicicola and B.cinerea. The sequence is that of Peptide ARACIN 1 from Arabidopsis thaliana (Mouse-ear cress).